The sequence spans 528 residues: GMP synthase [glutamine-hydrolyzing] (528 aa).

One can recognise a Glutamine amidotransferase type-1 domain in the interval 13–204 (AIVILDFGSQ…VYHICGCEPD (192 aa)). C90 (nucleophile) is an active-site residue. Catalysis depends on residues H178 and E180. Residues 205 to 403 (WTTTAFIEEA…LGLPEEIVRR (199 aa)) enclose the GMPS ATP-PPase domain. 232 to 238 (SGGVDSS) contributes to the ATP binding site.

Homodimer.

It carries out the reaction XMP + L-glutamine + ATP + H2O = GMP + L-glutamate + AMP + diphosphate + 2 H(+). The protein operates within purine metabolism; GMP biosynthesis; GMP from XMP (L-Gln route): step 1/1. Catalyzes the synthesis of GMP from XMP. The protein is GMP synthase [glutamine-hydrolyzing] of Prochlorococcus marinus (strain MIT 9303).